A 231-amino-acid chain; its full sequence is Eukaryotic translation initiation factor 4E-1 (231 aa).

2 EIF4G-binding regions span residues 56-59 (HPLE) and 66-102 (FDNP…NNIH). Residues 74–79 (RQTAWG), Lys106, and 124–125 (WE) contribute to the mRNA site. Residues Cys129 and Cys167 are joined by a disulfide bond. Positions 150 to 159 (YTLLAMIGHQ) are EIF4G-binding. MRNA is bound by residues 174–179 (RAKGEK) and 219–223 (KRLDR).

Belongs to the eukaryotic initiation factor 4E family. EIF4F is a multi-subunit complex, the composition of which varies with external and internal environmental conditions. It is composed of at least EIF4A, EIF4E and EIF4G. EIF4E is also known to interact with other partners. In higher plants two isoforms of EIF4F have been identified, named isoform EIF4F and isoform EIF(iso)4F. Isoform EIF4F has subunits p220 and p26, whereas isoform EIF(iso)4F has subunits p82 and p28. In terms of assembly, (Microbial infection) Interacts with potyvirus viral genome-linked protein (VPg); mostly with tobacco etch virus (TEV-HAT) VPg and, to a lower extent, with potato virus Y (PVY-LYE84 and PVY-LYE90) and pepper mottle virus (PepMoV) VPg. Post-translationally, according to the redox status, the Cys-129-Cys-167 disulfide bridge may have a role in regulating protein function by affecting its ability to bind capped mRNA.

It is found in the nucleus. It localises to the cytoplasm. Component of the protein complex eIF4F, which is involved in the recognition of the mRNA cap, ATP-dependent unwinding of 5'-terminal secondary structure and recruitment of mRNA to the ribosome. Recognizes and binds the 7-methylguanosine-containing mRNA cap during an early step in the initiation of protein synthesis and facilitates ribosome binding by inducing the unwinding of the mRNAs secondary structures. Key component of recessive resistance to potyviruses. Functionally, (Microbial infection) Susceptibility host factor required for viral infection (e.g. potato virus Y (PVY), pepper mottle virus (PepMoV) and tobacco etch virus (TEV)) by recruiting viral RNAs to the host ribosomal complex via an interaction with viral genome-linked protein (VPg). This chain is Eukaryotic translation initiation factor 4E-1, found in Solanum lycopersicum (Tomato).